The primary structure comprises 452 residues: Tripartite motif-containing protein 49C (452 aa).

Residues 15 to 56 (CPLCMNYFIDPVTIDCGHSFCRPCFYLNWQDIPFLVQCSECT) form an RING-type zinc finger. A B box-type zinc finger spans residues 88–129 (SEEQMCGTHRETKKIFCEVDRSLLCLLCSSSQEHRYHRHRPI). Zn(2+) contacts are provided by cysteine 93, histidine 96, cysteine 115, and histidine 121. Residues 269–452 (ELSAGPITGL…LRPIFCCIHF (184 aa)) enclose the B30.2/SPRY domain.

This is Tripartite motif-containing protein 49C (TRIM49C) from Homo sapiens (Human).